The following is a 430-amino-acid chain: Adenylosuccinate synthetase (430 aa).

GTP-binding positions include 12–18 and 40–42; these read GDEGKGK and GHT. Asp-13 (proton acceptor) is an active-site residue. Positions 13 and 40 each coordinate Mg(2+). IMP contacts are provided by residues 13 to 16, 38 to 41, Thr-128, Arg-142, Gln-223, Thr-238, and Arg-302; these read DEGK and NAGH. Catalysis depends on His-41, which acts as the Proton donor. Position 298–304 (298–304) interacts with substrate; it reads TTTGRPR. GTP contacts are provided by residues Arg-304, 330–332, and 412–414; these read SID and SVG.

It belongs to the adenylosuccinate synthetase family. As to quaternary structure, homodimer. It depends on Mg(2+) as a cofactor.

The protein resides in the cytoplasm. It carries out the reaction IMP + L-aspartate + GTP = N(6)-(1,2-dicarboxyethyl)-AMP + GDP + phosphate + 2 H(+). The protein operates within purine metabolism; AMP biosynthesis via de novo pathway; AMP from IMP: step 1/2. In terms of biological role, plays an important role in the de novo pathway of purine nucleotide biosynthesis. Catalyzes the first committed step in the biosynthesis of AMP from IMP. This chain is Adenylosuccinate synthetase, found in Streptococcus pyogenes serotype M6 (strain ATCC BAA-946 / MGAS10394).